We begin with the raw amino-acid sequence, 448 residues long: Glutamate--tRNA ligase 2 (448 aa).

Positions 9–19 (PSPTGKLHIGN) match the 'HIGH' region motif. The 'KMSKS' region signature appears at 240 to 244 (KISKR). An ATP-binding site is contributed by Lys243.

Belongs to the class-I aminoacyl-tRNA synthetase family. Glutamate--tRNA ligase type 1 subfamily. In terms of assembly, monomer.

The protein resides in the cytoplasm. The catalysed reaction is tRNA(Glu) + L-glutamate + ATP = L-glutamyl-tRNA(Glu) + AMP + diphosphate. In terms of biological role, catalyzes the attachment of glutamate to tRNA(Glu) in a two-step reaction: glutamate is first activated by ATP to form Glu-AMP and then transferred to the acceptor end of tRNA(Glu). This is Glutamate--tRNA ligase 2 from Orientia tsutsugamushi (strain Boryong) (Rickettsia tsutsugamushi).